Consider the following 208-residue polypeptide: dITP/XTP pyrophosphatase (208 aa).

17-22 contacts substrate; that stretch reads SNNPGK. Mg(2+)-binding residues include Asp49 and Asp78. The Proton acceptor role is filled by Asp78. Substrate contacts are provided by residues Ser79, 164-167, Lys187, and 192-193; these read FGYD and HR.

This sequence belongs to the HAM1 NTPase family. In terms of assembly, homodimer. Mg(2+) serves as cofactor.

It carries out the reaction XTP + H2O = XMP + diphosphate + H(+). The catalysed reaction is dITP + H2O = dIMP + diphosphate + H(+). It catalyses the reaction ITP + H2O = IMP + diphosphate + H(+). Its function is as follows. Pyrophosphatase that catalyzes the hydrolysis of nucleoside triphosphates to their monophosphate derivatives, with a high preference for the non-canonical purine nucleotides XTP (xanthosine triphosphate), dITP (deoxyinosine triphosphate) and ITP. Seems to function as a house-cleaning enzyme that removes non-canonical purine nucleotides from the nucleotide pool, thus preventing their incorporation into DNA/RNA and avoiding chromosomal lesions. This chain is dITP/XTP pyrophosphatase, found in Burkholderia pseudomallei (strain K96243).